Reading from the N-terminus, the 489-residue chain is Protein SOF1 (489 aa).

7 WD repeats span residues 65–105 (GHRD…EFVS), 113–158 (VTGL…YSNK), 177–214 (DGES…PVSD), 217–257 (WGAD…PTQK), 259–299 (VQTM…RSLN), 303–342 (DHVS…SREI), and 346–385 (KRMQ…RSNV). Composition is skewed to basic and acidic residues over residues 440-459 (REAN…ERKK) and 466-489 (HKYE…TQEK). Residues 440–489 (REANERRTRKDMPYISERKKQIVGTVHKYEDSGRDRKRRKEDDKRDTQEK) are disordered.

Belongs to the WD repeat DCAF13/WDSOF1 family. Interacts with snoRNA U3. Interacts with NOP1 and MPP10. Component of the ribosomal small subunit (SSU) processome composed of at least 40 protein subunits and snoRNA U3.

Its subcellular location is the nucleus. The protein resides in the nucleolus. Required for ribosomal RNA processing. The protein is Protein SOF1 (SOF1) of Saccharomyces cerevisiae (strain ATCC 204508 / S288c) (Baker's yeast).